A 277-amino-acid polypeptide reads, in one-letter code: Putative pyruvate, phosphate dikinase regulatory protein (277 aa).

Position 151 to 158 (151 to 158 (GISRTSKT)) interacts with ADP.

Belongs to the pyruvate, phosphate/water dikinase regulatory protein family. PDRP subfamily.

It catalyses the reaction N(tele)-phospho-L-histidyl/L-threonyl-[pyruvate, phosphate dikinase] + ADP = N(tele)-phospho-L-histidyl/O-phospho-L-threonyl-[pyruvate, phosphate dikinase] + AMP + H(+). The enzyme catalyses N(tele)-phospho-L-histidyl/O-phospho-L-threonyl-[pyruvate, phosphate dikinase] + phosphate + H(+) = N(tele)-phospho-L-histidyl/L-threonyl-[pyruvate, phosphate dikinase] + diphosphate. Bifunctional serine/threonine kinase and phosphorylase involved in the regulation of the pyruvate, phosphate dikinase (PPDK) by catalyzing its phosphorylation/dephosphorylation. The protein is Putative pyruvate, phosphate dikinase regulatory protein of Alkaliphilus oremlandii (strain OhILAs) (Clostridium oremlandii (strain OhILAs)).